A 331-amino-acid polypeptide reads, in one-letter code: Probable 5-dehydro-4-deoxyglucarate dehydratase 2 (331 aa).

Residues 1 to 23 (MSADTDTDTDTGTGTGPDTDTGT) are disordered. Residues 10-23 (DTGTGTGPDTDTGT) show a composition bias toward low complexity.

The protein belongs to the DapA family.

The catalysed reaction is 5-dehydro-4-deoxy-D-glucarate + H(+) = 2,5-dioxopentanoate + CO2 + H2O. The protein operates within carbohydrate acid metabolism; D-glucarate degradation; 2,5-dioxopentanoate from D-glucarate: step 2/2. This Streptomyces avermitilis (strain ATCC 31267 / DSM 46492 / JCM 5070 / NBRC 14893 / NCIMB 12804 / NRRL 8165 / MA-4680) protein is Probable 5-dehydro-4-deoxyglucarate dehydratase 2.